A 559-amino-acid chain; its full sequence is NXPE family member 3 (559 aa).

The N-terminal stretch at 1–30 is a signal peptide; it reads MWTNFFKLRLFCCLLAVLMVVVLVINVTQV. Residues Asn237, Asn292, and Asn346 are each glycosylated (N-linked (GlcNAc...) asparagine).

It belongs to the NXPE family.

Its subcellular location is the secreted. The polypeptide is NXPE family member 3 (NXPE3) (Homo sapiens (Human)).